Consider the following 429-residue polypeptide: UPF0597 protein BT_2080 (429 aa).

The protein belongs to the UPF0597 family.

This chain is UPF0597 protein BT_2080, found in Bacteroides thetaiotaomicron (strain ATCC 29148 / DSM 2079 / JCM 5827 / CCUG 10774 / NCTC 10582 / VPI-5482 / E50).